The primary structure comprises 355 residues: Uroporphyrinogen decarboxylase (355 aa).

Residues 27-31 (RQAGR), aspartate 78, tyrosine 155, serine 210, and histidine 328 each bind substrate.

Belongs to the uroporphyrinogen decarboxylase family. As to quaternary structure, homodimer.

It localises to the cytoplasm. It catalyses the reaction uroporphyrinogen III + 4 H(+) = coproporphyrinogen III + 4 CO2. The protein operates within porphyrin-containing compound metabolism; protoporphyrin-IX biosynthesis; coproporphyrinogen-III from 5-aminolevulinate: step 4/4. Its function is as follows. Catalyzes the decarboxylation of four acetate groups of uroporphyrinogen-III to yield coproporphyrinogen-III. The sequence is that of Uroporphyrinogen decarboxylase from Pseudomonas fluorescens (strain ATCC BAA-477 / NRRL B-23932 / Pf-5).